Consider the following 387-residue polypeptide: Phosphoglycerate kinase (387 aa).

Substrate contacts are provided by residues 21–23 (DLN), Arg36, and 59–62 (HLGR). Position 84 is an N6-acetyllysine (Lys84). Substrate-binding residues include Arg113 and Arg146. ATP is bound by residues Lys197, Glu314, and 340–343 (GGDT).

This sequence belongs to the phosphoglycerate kinase family. Monomer.

The protein resides in the cytoplasm. It catalyses the reaction (2R)-3-phosphoglycerate + ATP = (2R)-3-phospho-glyceroyl phosphate + ADP. Its pathway is carbohydrate degradation; glycolysis; pyruvate from D-glyceraldehyde 3-phosphate: step 2/5. The polypeptide is Phosphoglycerate kinase (Shigella sonnei (strain Ss046)).